Reading from the N-terminus, the 344-residue chain is Leucine-rich repeat-containing protein 75A (344 aa).

A disordered region spans residues 1–25 (MGTRQTKGSLAERASPGAAPGPRRE). The segment covering 11-21 (AERASPGAAPG) has biased composition (low complexity). LRR repeat units follow at residues 204–217 (VDSV…LTDD) and 229–242 (LPRL…GNRL). The tract at residues 295-344 (LPTILELGEGPGSGEEVREGTVGQEDPGGGPVAPAEDHHEGKETVAAAQT) is disordered.

The protein belongs to the LRRC75 family.

The protein is Leucine-rich repeat-containing protein 75A (LRRC75A) of Homo sapiens (Human).